Consider the following 1050-residue polypeptide: MDS1 and EVI1 complex locus protein EVI1-B (1050 aa).

C2H2-type zinc fingers lie at residues 21 to 48 (YHCEECDQLFESKTELSNHQKYSCGTPH), 75 to 97 (HECKECDQVFPDMQSLEKHLLSH), and 103 to 125 (YKCDQCPKAFNWKSNLIRHQMSH). The segment at 131-155 (YECENCSKQVFTDPSNLQRHIRSQH) adopts a C2H2-type 4; degenerate zinc-finger fold. 2 C2H2-type zinc fingers span residues 161–183 (HACSECGKTFATSSGLKQHKHIH) and 189–211 (FVCEVCHKSYTQFSNLCRHKRMH). The C2H2-type 7; atypical zinc-finger motif lies at 218-240 (IKCKDCGQMFSTTSSLNKHRRFC). Disordered regions lie at residues 371–421 (ITEN…SDKD) and 529–612 (PLKV…EKKD). Basic and acidic residues predominate over residues 379-390 (RPHEKVSDHSES). Polar residues predominate over residues 397–411 (STPSGSDLETTSGSD). The Nuclear localization signal signature appears at 420–433 (KDKLKENGKLYKDK). Residues 529–542 (PLKVEPESPKESKK) are compositionally biased toward basic and acidic residues. Positions 551–555 (AFDLT) match the CTBP-binding motif 1 motif. Positions 564 to 576 (SPNAPSKSSAPTS) are enriched in low complexity. The CTBP-binding motif 2 motif lies at 582–586 (PLDLS). Residues 588–598 (GSRSRATTTKQ) show a composition bias toward polar residues. The segment covering 599–612 (TESRKNHIFGEKKD) has biased composition (basic and acidic residues). 3 C2H2-type zinc fingers span residues 731-753 (YTCRYCGKIFPRSANLTRHLRTH), 759-782 (YRCKYCDRSFSISSNLQRHIRNIH), and 788-810 (FKCHLCDRCFGQQTNLDRHLKKH). The segment at 928 to 951 (KSEVNCKVSPSRHDDDDDDEEEDF) is disordered.

In terms of assembly, homooligomer. Interacts with ctbp.

It is found in the nucleus. Its subcellular location is the nucleus speckle. Functionally, transcriptional repressor during pronephros development. Plays a role in regionalization of the pronephros; may promote formation of the distal tubule and duct over formation of the glomus and proximal tubule. In Xenopus laevis (African clawed frog), this protein is MDS1 and EVI1 complex locus protein EVI1-B (mecom-b).